The following is a 269-amino-acid chain: Shikimate dehydrogenase (NADP(+)) (269 aa).

Residues 19 to 21 and Thr-66 contribute to the shikimate site; that span reads SLS. The active-site Proton acceptor is the Lys-70. Asp-82 lines the NADP(+) pocket. 2 residues coordinate shikimate: Asn-91 and Asp-106. Residues 130 to 134, 153 to 158, and Ile-214 contribute to the NADP(+) site; these read GAGGA and NRTKEK. Residue Tyr-216 coordinates shikimate. An NADP(+)-binding site is contributed by Gly-235. Gln-242 serves as a coordination point for shikimate.

This sequence belongs to the shikimate dehydrogenase family. Homodimer.

It carries out the reaction shikimate + NADP(+) = 3-dehydroshikimate + NADPH + H(+). Its pathway is metabolic intermediate biosynthesis; chorismate biosynthesis; chorismate from D-erythrose 4-phosphate and phosphoenolpyruvate: step 4/7. Its function is as follows. Involved in the biosynthesis of the chorismate, which leads to the biosynthesis of aromatic amino acids. Catalyzes the reversible NADPH linked reduction of 3-dehydroshikimate (DHSA) to yield shikimate (SA). This chain is Shikimate dehydrogenase (NADP(+)), found in Aquifex aeolicus (strain VF5).